Here is a 90-residue protein sequence, read N- to C-terminus: Conotoxin Ca8.2 (90 aa).

The signal sequence occupies residues 1-21 (MMLKMGAMFVLLLLFILPSSQ). Residues 22-46 (QEGDVQARKTHLKRGFYGTLAMSTR) constitute a propeptide that is removed on maturation. At glutamine 89 the chain carries Glutamine amide.

It belongs to the conotoxin S superfamily. Post-translationally, contains 5 disulfide bonds. Expressed by the venom duct.

The protein resides in the secreted. This is Conotoxin Ca8.2 from Conus caracteristicus (Characteristic cone).